Consider the following 794-residue polypeptide: Signal transducer and activator of transcription 5A (794 aa).

Tyr90 is subject to Phosphotyrosine. Ser129 is subject to Phosphoserine. Residues 589 to 686 form the SH2 domain; the sequence is WNDGAILGFV…EVFSKYYTPV (98 aa). A Phosphotyrosine modification is found at Tyr682. Phosphotyrosine; by JAK2 is present on Tyr694. Residues 765–794 are disordered; it reads EELLRRPNGQSGPLSPPPAGLFTPARGSLS.

Belongs to the transcription factor STAT family. Forms a homodimer or a heterodimer with a related family member. Binds NR3C1. Interacts with NCOA1 and SOCS7. Interacts with ERBB4. Interacts with EBF4. Interacts with CD69. In terms of processing, ISGylated. Post-translationally, tyrosine phosphorylated in response to KITLG/SCF, IL2, IL3, IL7, IL15, CSF2/GMCSF, GH1, PRL, EPO and THPO. Activated KIT promotes phosphorylation on tyrosine residues and subsequent translocation to the nucleus. Tyrosine phosphorylated in response to constitutively activated FGFR1, FGFR2, FGFR3 and FGFR4. Tyrosine phosphorylation is required for DNA-binding activity and dimerization. Serine phosphorylation is also required for maximal transcriptional activity. Tyrosine phosphorylated in response to signaling via activated FLT3; wild-type FLT3 results in much weaker phosphorylation than constitutively activated mutant FLT3. Alternatively, can be phosphorylated by JAK2 at Tyr-694. In terms of tissue distribution, found in mammary gland and, in lesser extent, in ovary, thymus, spleen, kidney, lung, muscle and adrenal gland.

It is found in the cytoplasm. The protein resides in the nucleus. Functionally, carries out a dual function: signal transduction and activation of transcription. Mediates cellular responses to the cytokine KITLG/SCF and other growth factors. May mediate cellular responses to activated FGFR1, FGFR2, FGFR3 and FGFR4. Binds to the GAS element and activates PRL-induced transcription. Regulates the expression of milk proteins during lactation. In Ovis aries (Sheep), this protein is Signal transducer and activator of transcription 5A (STAT5A).